We begin with the raw amino-acid sequence, 160 residues long: SsrA-binding protein (160 aa).

Positions 136–160 are disordered; it reads KRDTVRERDSNRELQRAVRNKGKED.

The protein belongs to the SmpB family.

The protein localises to the cytoplasm. Functionally, required for rescue of stalled ribosomes mediated by trans-translation. Binds to transfer-messenger RNA (tmRNA), required for stable association of tmRNA with ribosomes. tmRNA and SmpB together mimic tRNA shape, replacing the anticodon stem-loop with SmpB. tmRNA is encoded by the ssrA gene; the 2 termini fold to resemble tRNA(Ala) and it encodes a 'tag peptide', a short internal open reading frame. During trans-translation Ala-aminoacylated tmRNA acts like a tRNA, entering the A-site of stalled ribosomes, displacing the stalled mRNA. The ribosome then switches to translate the ORF on the tmRNA; the nascent peptide is terminated with the 'tag peptide' encoded by the tmRNA and targeted for degradation. The ribosome is freed to recommence translation, which seems to be the essential function of trans-translation. In Pseudomonas putida (strain W619), this protein is SsrA-binding protein.